Here is a 703-residue protein sequence, read N- to C-terminus: Methionine--tRNA ligase (703 aa).

The 'HIGH' region motif lies at 12-22 (PYANGPLHIGH). Zn(2+)-binding residues include cysteine 143, cysteine 146, cysteine 156, and cysteine 159. The short motif at 331–335 (KMSKT) is the 'KMSKS' region element. Lysine 334 serves as a coordination point for ATP. Low complexity-rich tracts occupy residues 556 to 568 (AAPQ…PAKG) and 577 to 594 (EAPA…AAES). Disordered regions lie at residues 556–594 (AAPQ…AAES) and 682–703 (GPGG…SEVK). Residues 602–703 (DFAKVVLKAG…GDVAPGSEVK (102 aa)) enclose the tRNA-binding domain.

The protein belongs to the class-I aminoacyl-tRNA synthetase family. MetG type 1 subfamily. Homodimer. It depends on Zn(2+) as a cofactor.

It localises to the cytoplasm. The catalysed reaction is tRNA(Met) + L-methionine + ATP = L-methionyl-tRNA(Met) + AMP + diphosphate. Its function is as follows. Is required not only for elongation of protein synthesis but also for the initiation of all mRNA translation through initiator tRNA(fMet) aminoacylation. The protein is Methionine--tRNA ligase of Myxococcus xanthus (strain DK1622).